Reading from the N-terminus, the 262-residue chain is Serine O-acetyltransferase (262 aa).

Residue Cys-107 is the Acyl-thioester intermediate of the active site. Lys-128 contributes to the substrate binding site. His-200 serves as the catalytic Proton acceptor. Residue Glu-202 is part of the active site. Position 214 (Arg-214) interacts with substrate.

Belongs to the MetA family.

The protein localises to the cytoplasm. The catalysed reaction is L-serine + acetyl-CoA = O-acetyl-L-serine + CoA. The enzyme catalyses L-homoserine + acetyl-CoA = O-acetyl-L-homoserine + CoA. The protein operates within amino-acid biosynthesis; L-cysteine biosynthesis; L-cysteine from L-serine: step 1/2. Functionally, transfers an acetyl group from acetyl-CoA to L-serine, forming acetyl-L-serine. In vitro, also has homoserine acetyl transferase activity. This chain is Serine O-acetyltransferase, found in Lactobacillus acidophilus.